We begin with the raw amino-acid sequence, 60 residues long: MSEKTIKVTLVKSVIGTKQSHRATVRGLGLRRTNHCVELQDTPEIRGMVNKVSYLLKCEG.

It belongs to the universal ribosomal protein uL30 family. In terms of assembly, part of the 50S ribosomal subunit.

This is Large ribosomal subunit protein uL30 from Aromatoleum aromaticum (strain DSM 19018 / LMG 30748 / EbN1) (Azoarcus sp. (strain EbN1)).